A 327-amino-acid chain; its full sequence is N-acetyl-gamma-glutamyl-phosphate reductase (327 aa).

Residue cysteine 136 is part of the active site.

Belongs to the NAGSA dehydrogenase family. Type 1 subfamily.

It is found in the cytoplasm. It carries out the reaction N-acetyl-L-glutamate 5-semialdehyde + phosphate + NADP(+) = N-acetyl-L-glutamyl 5-phosphate + NADPH + H(+). It functions in the pathway amino-acid biosynthesis; L-arginine biosynthesis; N(2)-acetyl-L-ornithine from L-glutamate: step 3/4. Its function is as follows. Catalyzes the NADPH-dependent reduction of N-acetyl-5-glutamyl phosphate to yield N-acetyl-L-glutamate 5-semialdehyde. The protein is N-acetyl-gamma-glutamyl-phosphate reductase of Xylella fastidiosa (strain M23).